Consider the following 630-residue polypeptide: UvrABC system protein C (630 aa).

The tract at residues 1-96 is disordered; the sequence is MGAEGLQGEG…GEAHRRGGTG (96 aa). Positions 9–28 are enriched in low complexity; that stretch reads EGEVPPQGAGVPGQVQVGVH. Positions 52–125 constitute a GIY-YIG domain; the sequence is DPRGLPVEAG…IKAHRPLYNV (74 aa). Basic and acidic residues predominate over residues 75-91; sequence RPGEKLLPRRGQGEAHR. The UVR domain occupies 234–269; the sequence is DGLLQELEAKMREAARRLEFERAAEIRDQMEALRAF.

This sequence belongs to the UvrC family. As to quaternary structure, interacts with UvrB in an incision complex.

The protein resides in the cytoplasm. In terms of biological role, the UvrABC repair system catalyzes the recognition and processing of DNA lesions. UvrC both incises the 5' and 3' sides of the lesion. The N-terminal half is responsible for the 3' incision and the C-terminal half is responsible for the 5' incision. This is UvrABC system protein C from Thermus thermophilus (strain ATCC BAA-163 / DSM 7039 / HB27).